We begin with the raw amino-acid sequence, 369 residues long: tRNA/tmRNA (uracil-C(5))-methyltransferase (369 aa).

The S-adenosyl-L-methionine site is built by glutamine 193, tyrosine 221, asparagine 226, glutamate 242, and aspartate 302. Catalysis depends on cysteine 327, which acts as the Nucleophile. The Proton acceptor role is filled by glutamate 361.

It belongs to the class I-like SAM-binding methyltransferase superfamily. RNA M5U methyltransferase family. TrmA subfamily.

It carries out the reaction uridine(54) in tRNA + S-adenosyl-L-methionine = 5-methyluridine(54) in tRNA + S-adenosyl-L-homocysteine + H(+). The enzyme catalyses uridine(341) in tmRNA + S-adenosyl-L-methionine = 5-methyluridine(341) in tmRNA + S-adenosyl-L-homocysteine + H(+). Dual-specificity methyltransferase that catalyzes the formation of 5-methyluridine at position 54 (m5U54) in all tRNAs, and that of position 341 (m5U341) in tmRNA (transfer-mRNA). In Actinobacillus succinogenes (strain ATCC 55618 / DSM 22257 / CCUG 43843 / 130Z), this protein is tRNA/tmRNA (uracil-C(5))-methyltransferase.